Reading from the N-terminus, the 305-residue chain is tRNA pseudouridine synthase B (305 aa).

The active-site Nucleophile is Asp39.

It belongs to the pseudouridine synthase TruB family. Type 1 subfamily.

It carries out the reaction uridine(55) in tRNA = pseudouridine(55) in tRNA. In terms of biological role, responsible for synthesis of pseudouridine from uracil-55 in the psi GC loop of transfer RNAs. The chain is tRNA pseudouridine synthase B from Staphylococcus saprophyticus subsp. saprophyticus (strain ATCC 15305 / DSM 20229 / NCIMB 8711 / NCTC 7292 / S-41).